The chain runs to 706 residues: Probable E3 ubiquitin ligase complex SCF subunit sconB (706 aa).

Over residues 1 to 12 the composition is skewed to basic and acidic residues; it reads MQSDDRSVREGS. 2 disordered regions span residues 1–43 and 56–76; these read MQSD…LLQQ and TAEE…SFGA. Positions 34–43 are enriched in low complexity; that stretch reads QQQQQQLLQQ. The 47-residue stretch at 203–249 folds into the F-box domain; sequence IDFLTALPPEISFKILCYLDTTSLCKAAQVSSRWRALADDDVVWHRM. WD repeat units follow at residues 377–414, 417–456, 458–494, 496–537, 589–632, 635–672, and 675–706; these read GHTN…ELRT, GHQS…STYT, HRGG…TFLL, GHTD…RTFH, ATET…CLRT, GHLE…CERT, and GHSG…SFRN.

The protein belongs to the WD repeat MET30/SCONB/SCON-2 family. In terms of assembly, component of the SCF(sconB) E3 ubiquitin ligase complex.

It functions in the pathway protein modification; protein ubiquitination. Functionally, component of the SCF(sconB) E3 ubiquitin ligase complex involved in the regulation of sulfur metabolite repression, probably by mediating the inactivation or degradation of the metR transcription factor. The polypeptide is Probable E3 ubiquitin ligase complex SCF subunit sconB (sconB) (Aspergillus flavus (strain ATCC 200026 / FGSC A1120 / IAM 13836 / NRRL 3357 / JCM 12722 / SRRC 167)).